The primary structure comprises 147 residues: Large ribosomal subunit protein uL15 (147 aa).

Positions 1–10 (MYLNTLSPNS) are enriched in polar residues. The disordered stretch occupies residues 1-48 (MYLNTLSPNSKSHKKSKRVGRGIGSGFGKTSGRGHKGQKSRSGCKIRR). Residues 11–20 (KSHKKSKRVG) show a composition bias toward basic residues. The segment covering 21 to 31 (RGIGSGFGKTS) has biased composition (gly residues). Positions 32–47 (GRGHKGQKSRSGCKIR) are enriched in basic residues.

Belongs to the universal ribosomal protein uL15 family. Part of the 50S ribosomal subunit.

Binds to the 23S rRNA. This chain is Large ribosomal subunit protein uL15, found in Buchnera aphidicola subsp. Baizongia pistaciae (strain Bp).